A 374-amino-acid chain; its full sequence is Chaperone protein DnaJ (374 aa).

The J domain occupies 5-70; it reads DYYEILGVSR…QKRAAYDQYG (66 aa). A CR-type zinc finger spans residues 129 to 207; sequence GVTREIRIPT…CHGHGRVEKS (79 aa). Residues cysteine 142, cysteine 145, cysteine 159, cysteine 162, cysteine 181, cysteine 184, cysteine 195, and cysteine 198 each coordinate Zn(2+). CXXCXGXG motif repeat units follow at residues 142-149, 159-166, 181-188, and 195-202; these read CDVCHGSG, CPTCHGQG, CPTCQGQG, and CTKCHGHG.

Belongs to the DnaJ family. In terms of assembly, homodimer. The cofactor is Zn(2+).

The protein localises to the cytoplasm. Participates actively in the response to hyperosmotic and heat shock by preventing the aggregation of stress-denatured proteins and by disaggregating proteins, also in an autonomous, DnaK-independent fashion. Unfolded proteins bind initially to DnaJ; upon interaction with the DnaJ-bound protein, DnaK hydrolyzes its bound ATP, resulting in the formation of a stable complex. GrpE releases ADP from DnaK; ATP binding to DnaK triggers the release of the substrate protein, thus completing the reaction cycle. Several rounds of ATP-dependent interactions between DnaJ, DnaK and GrpE are required for fully efficient folding. Also involved, together with DnaK and GrpE, in the DNA replication of plasmids through activation of initiation proteins. The chain is Chaperone protein DnaJ from Sodalis glossinidius (strain morsitans).